The following is a 163-amino-acid chain: Early nodulin-like protein 20 (163 aa).

A signal peptide spans 1–25; that stretch reads MMGKYLWALVYVTVMILIIVVEVES. Positions 26-126 constitute a Phytocyanin domain; it reads SLHRVGGGRY…GMKLAITVLP (101 aa). 5 N-linked (GlcNAc...) asparagine glycosylation sites follow: Asn42, Asn63, Asn73, Asn88, and Asn135. A disulfide bridge links Cys80 with Cys114. Ser138 is lipidated: GPI-anchor amidated serine. A propeptide spans 139-163 (removed in mature form); it reads TTTPLIPPNAITAAILIFAFKALLL.

It belongs to the early nodulin-like (ENODL) family.

It localises to the cell membrane. Its function is as follows. May act as a carbohydrate transporter. In Arabidopsis thaliana (Mouse-ear cress), this protein is Early nodulin-like protein 20.